Consider the following 155-residue polypeptide: 3-hydroxyacyl-[acyl-carrier-protein] dehydratase FabZ (155 aa).

Residue His61 is part of the active site.

Belongs to the thioester dehydratase family. FabZ subfamily.

The protein localises to the cytoplasm. It carries out the reaction a (3R)-hydroxyacyl-[ACP] = a (2E)-enoyl-[ACP] + H2O. In terms of biological role, involved in unsaturated fatty acids biosynthesis. Catalyzes the dehydration of short chain beta-hydroxyacyl-ACPs and long chain saturated and unsaturated beta-hydroxyacyl-ACPs. The sequence is that of 3-hydroxyacyl-[acyl-carrier-protein] dehydratase FabZ from Synechococcus elongatus (strain ATCC 33912 / PCC 7942 / FACHB-805) (Anacystis nidulans R2).